The following is a 393-amino-acid chain: Formate-dependent phosphoribosylglycinamide formyltransferase (393 aa).

N(1)-(5-phospho-beta-D-ribosyl)glycinamide contacts are provided by residues 22–23 (EL) and Glu-82. ATP contacts are provided by residues Arg-114, Lys-155, 160–165 (SSGKGQ), 195–198 (EGLV), and Glu-203. The ATP-grasp domain occupies 119 to 308 (RLAAETLQLP…EFALHVRAFL (190 aa)). Residues Glu-267 and Glu-279 each contribute to the Mg(2+) site. N(1)-(5-phospho-beta-D-ribosyl)glycinamide is bound by residues Asp-286, Lys-355, and 362 to 363 (RR).

Belongs to the PurK/PurT family. Homodimer.

The enzyme catalyses N(1)-(5-phospho-beta-D-ribosyl)glycinamide + formate + ATP = N(2)-formyl-N(1)-(5-phospho-beta-D-ribosyl)glycinamide + ADP + phosphate + H(+). The protein operates within purine metabolism; IMP biosynthesis via de novo pathway; N(2)-formyl-N(1)-(5-phospho-D-ribosyl)glycinamide from N(1)-(5-phospho-D-ribosyl)glycinamide (formate route): step 1/1. In terms of biological role, involved in the de novo purine biosynthesis. Catalyzes the transfer of formate to 5-phospho-ribosyl-glycinamide (GAR), producing 5-phospho-ribosyl-N-formylglycinamide (FGAR). Formate is provided by PurU via hydrolysis of 10-formyl-tetrahydrofolate. The sequence is that of Formate-dependent phosphoribosylglycinamide formyltransferase from Yersinia pseudotuberculosis serotype IB (strain PB1/+).